The chain runs to 507 residues: Arabinose import ATP-binding protein AraG (507 aa).

2 ABC transporter domains span residues 14–249 (LRFN…MVGR) and 249–505 (RDIQ…LPRT). 46–53 (GENGAGKS) serves as a coordination point for ATP.

The protein belongs to the ABC transporter superfamily. Arabinose importer (TC 3.A.1.2.2) family. The complex is composed of two ATP-binding proteins (AraG), two transmembrane proteins (AraH) and a solute-binding protein (AraF).

The protein localises to the cell inner membrane. It catalyses the reaction L-arabinose(out) + ATP + H2O = L-arabinose(in) + ADP + phosphate + H(+). Its function is as follows. Part of the ABC transporter complex AraFGH involved in arabinose import. Responsible for energy coupling to the transport system. The chain is Arabinose import ATP-binding protein AraG from Pseudomonas syringae pv. syringae (strain B728a).